Reading from the N-terminus, the 495-residue chain is Probable cobyric acid synthase (495 aa).

One can recognise a GATase cobBQ-type domain in the interval 256-441 (DVDIAVIRLT…LHGLFDNVNI (186 aa)). Cys-334 functions as the Nucleophile in the catalytic mechanism. His-433 is an active-site residue.

This sequence belongs to the CobB/CobQ family. CobQ subfamily.

It participates in cofactor biosynthesis; adenosylcobalamin biosynthesis. Catalyzes amidations at positions B, D, E, and G on adenosylcobyrinic A,C-diamide. NH(2) groups are provided by glutamine, and one molecule of ATP is hydrogenolyzed for each amidation. The sequence is that of Probable cobyric acid synthase from Methanococcoides burtonii (strain DSM 6242 / NBRC 107633 / OCM 468 / ACE-M).